A 51-amino-acid chain; its full sequence is MSAHKTFIIKRKLAKKLKQNRPIPQWVRMRTGNTIRYNAKRRHWRRTKLKL.

The protein belongs to the eukaryotic ribosomal protein eL39 family.

In Plutella xylostella (Diamondback moth), this protein is Large ribosomal subunit protein eL39 (RpL39).